The chain runs to 500 residues: Glycerol kinase (500 aa).

T13 serves as a coordination point for ADP. ATP-binding residues include T13, T14, and S15. Position 13 (T13) interacts with sn-glycerol 3-phosphate. R17 lines the ADP pocket. Sn-glycerol 3-phosphate is bound by residues R83, E84, Y135, and D244. Glycerol contacts are provided by R83, E84, Y135, D244, and Q245. ADP contacts are provided by T266 and G309. Residues T266, G309, Q313, and G410 each coordinate ATP. G410 and N414 together coordinate ADP.

It belongs to the FGGY kinase family.

The catalysed reaction is glycerol + ATP = sn-glycerol 3-phosphate + ADP + H(+). Its pathway is polyol metabolism; glycerol degradation via glycerol kinase pathway; sn-glycerol 3-phosphate from glycerol: step 1/1. Inhibited by fructose 1,6-bisphosphate (FBP). Its function is as follows. Key enzyme in the regulation of glycerol uptake and metabolism. Catalyzes the phosphorylation of glycerol to yield sn-glycerol 3-phosphate. The protein is Glycerol kinase of Burkholderia vietnamiensis (strain G4 / LMG 22486) (Burkholderia cepacia (strain R1808)).